The sequence spans 155 residues: Protein-export protein SecB (155 aa).

It belongs to the SecB family. Homotetramer, a dimer of dimers. One homotetramer interacts with 1 SecA dimer.

Its subcellular location is the cytoplasm. One of the proteins required for the normal export of preproteins out of the cell cytoplasm. It is a molecular chaperone that binds to a subset of precursor proteins, maintaining them in a translocation-competent state. It also specifically binds to its receptor SecA. The sequence is that of Protein-export protein SecB from Salmonella heidelberg (strain SL476).